A 40-amino-acid polypeptide reads, in one-letter code: Beta-defensin 2 (40 aa).

Cystine bridges form between C7–C36, C14–C29, and C19–C37.

The protein belongs to the beta-defensin family. As to expression, neutrophilic granules.

It is found in the secreted. Its function is as follows. Has bactericidal activity. Active against E.coli ML35 and S.aureus 502A. The chain is Beta-defensin 2 (DEFB2) from Bos taurus (Bovine).